Consider the following 158-residue polypeptide: C-type lectin BiL (158 aa).

A signal peptide spans Met-1 to Gly-23. Intrachain disulfides connect Cys-26–Cys-37, Cys-54–Cys-154, Cys-61–Cys-156, and Cys-129–Cys-146. Positions Met-33–Gln-155 constitute a C-type lectin domain. Residues Gln-119, Asp-121, Glu-127, Asn-142, and Asp-143 each coordinate Ca(2+). Positions Gln-119 to Asp-121 match the Galactose-binding motif.

As to quaternary structure, homodimer; disulfide-linked. In terms of tissue distribution, expressed by the venom gland.

Its subcellular location is the secreted. Lectin with a hemagglutinating activity that is inhibited by galactose, lactose and EDTA. Is calcium-dependent. Shows effects on the renal function of isolated perfused rat kidneys by increasing both perfusion pressure (PP) and renal vascular resistance (RVR). In addition, the urinary flow and glomerular filtration rate (GFR) decreases significantly. The changes observed may reflect direct injury to the glomerular and tubular renal cells, and the rise in permeability in the glomerular endothelial cells, may be the effect of interactions of C-type lectin with endothelial cells or due to release of other mediators by mesangial, tubular and endothelial cells. The chain is C-type lectin BiL from Bothrops insularis (Golden lancehead).